A 358-amino-acid chain; its full sequence is Nicotinate-nucleotide--dimethylbenzimidazole phosphoribosyltransferase (358 aa).

Glutamate 314 (proton acceptor) is an active-site residue.

The protein belongs to the CobT family.

It carries out the reaction 5,6-dimethylbenzimidazole + nicotinate beta-D-ribonucleotide = alpha-ribazole 5'-phosphate + nicotinate + H(+). It functions in the pathway nucleoside biosynthesis; alpha-ribazole biosynthesis; alpha-ribazole from 5,6-dimethylbenzimidazole: step 1/2. In terms of biological role, catalyzes the synthesis of alpha-ribazole-5'-phosphate from nicotinate mononucleotide (NAMN) and 5,6-dimethylbenzimidazole (DMB). The polypeptide is Nicotinate-nucleotide--dimethylbenzimidazole phosphoribosyltransferase (Mycobacterium ulcerans (strain Agy99)).